A 42-amino-acid polypeptide reads, in one-letter code: Photosystem I reaction center subunit IX (42 aa).

The helical transmembrane segment at 7-27 threads the bilayer; it reads FLSLGPVLLVLWLSVQATLLI.

The protein belongs to the PsaJ family.

The protein localises to the cellular thylakoid membrane. May help in the organization of the PsaE and PsaF subunits. This is Photosystem I reaction center subunit IX from Gloeothece citriformis (strain PCC 7424) (Cyanothece sp. (strain PCC 7424)).